We begin with the raw amino-acid sequence, 489 residues long: 3-octaprenyl-4-hydroxybenzoate carboxy-lyase (489 aa).

Asn-172 lines the Mn(2+) pocket. Prenylated FMN-binding positions include 175–177 (IYR), 189–191 (RWL), and 194–195 (RG). Residue Glu-238 coordinates Mn(2+). Asp-287 acts as the Proton donor in catalysis.

This sequence belongs to the UbiD family. Homohexamer. It depends on prenylated FMN as a cofactor. Requires Mn(2+) as cofactor.

The protein resides in the cell membrane. The enzyme catalyses a 4-hydroxy-3-(all-trans-polyprenyl)benzoate + H(+) = a 2-(all-trans-polyprenyl)phenol + CO2. Its pathway is cofactor biosynthesis; ubiquinone biosynthesis. Catalyzes the decarboxylation of 3-octaprenyl-4-hydroxy benzoate to 2-octaprenylphenol, an intermediate step in ubiquinone biosynthesis. The sequence is that of 3-octaprenyl-4-hydroxybenzoate carboxy-lyase from Glaesserella parasuis serovar 5 (strain SH0165) (Haemophilus parasuis).